The chain runs to 938 residues: Glutamate receptor ionotropic, NMDA 1 (938 aa).

Residues 1–18 (MSTMHLLTFALLFSCSFA) form the signal peptide. Residues 19–559 (RAACDPKIVN…TLDSFMQPFQ (541 aa)) are Extracellular-facing. Asparagine 61, asparagine 203, asparagine 239, asparagine 276, asparagine 300, asparagine 350, asparagine 368, asparagine 440, asparagine 471, and asparagine 491 each carry an N-linked (GlcNAc...) asparagine glycan. An intrachain disulfide couples cysteine 79 to cysteine 308. 2 cysteine pairs are disulfide-bonded: cysteine 420–cysteine 454 and cysteine 436–cysteine 455. Glycine is bound by residues proline 516, threonine 518, and arginine 523. A helical membrane pass occupies residues 560 to 580 (STLWLLVGLSVHVVAVMLYLL). At 581–602 (DRFSPFGRFKVNSEEEEEDALT) the chain is on the cytoplasmic side. Positions 603–624 (LSSAMWFSWGVLLNSGIGEGAP) form an intramembrane region, discontinuously helical. The pore-forming stretch occupies residues 603–624 (LSSAMWFSWGVLLNSGIGEGAP). Topologically, residues 625-630 (RSFSAR) are cytoplasmic. Residues 631–647 (ILGMVWAGFAMIIVASY) form a helical membrane-spanning segment. Over 648-812 (TANLAAFLVL…NAPATLTFEN (165 aa)) the chain is Extracellular. The N-linked (GlcNAc...) asparagine glycan is linked to asparagine 674. Glycine is bound by residues serine 688 and aspartate 732. The cysteines at positions 744 and 798 are disulfide-linked. N-linked (GlcNAc...) asparagine glycosylation is present at asparagine 771. The chain crosses the membrane as a helical span at residues 813–833 (MAGVFMLVAGGIVAGIFLIFI). The Cytoplasmic portion of the chain corresponds to 834 to 938 (EIAYKRHKDA…LQLCSRHRES (105 aa)). Residue lysine 877 is modified to Phosphoserine. A phosphoserine; by PKC mark is found at serine 889, serine 890, serine 896, and serine 897. Residues 889–938 (SSFKRRRSSKDTSTGGGRGALQNQKDTVLPRRAIEREEGQLQLCSRHRES) are disordered. Lysine 898 bears the Phosphoserine mark. The span at 916–927 (VLPRRAIEREEG) shows a compositional bias: basic and acidic residues.

It belongs to the glutamate-gated ion channel (TC 1.A.10.1) family. NR1/GRIN1 subfamily. As to quaternary structure, heterotetramer; the NMDAR subunits are modular and harbor tiered domains that function in concert to regulate opening and closing of the cation-selective ion channel pore. Forms heterotetrameric channels composed of two GluN1/zeta subunits (GRIN1), and two identical GluN2/epsilon subunits (GRIN2A, GRIN2B, GRIN2C or GRIN2D) or GluN3 subunits (GRIN3A or GRIN3B) (in vitro). Can also form heterotetrameric channels that contain at least two GluN1 subunits and at least two different GluN2 subunits (or a combination of one GluN2 and one GluN3 subunits) (in vitro). In vivo, the subunit composition may vary in function of the expression levels of the different subunits. Found in a complex with GRIN2A or GRIN2B, GRIN3A and PPP2CB. Found in a complex with GRIN2A or GRIN2B and GRIN3B;. Interacts with SNX27 (via PDZ domain); the interaction is required for recycling to the plasma membrane when endocytosed and prevent degradation in lysosomes. Interacts with DLG4 and MPDZ. Interacts with LRFN1 and LRFN2. Interacts with MYZAP. Found in a complex with DLG4 and PRR7. Found in a complex with GRIN2B and PRR7. Interacts with PRR7; the interaction is reduced following NMDA receptor activity. NMDA is probably regulated by C-terminal phosphorylation of an isoform of NR1 by PKC. Dephosphorylated on Ser-897 probably by protein phosphatase 2A (PPP2CB). Its phosphorylated state is influenced by the formation of the NMDAR-PPP2CB complex and the NMDAR channel activity. Detected throughout the brain, in brain cortex, cerebellum, thalamus and olfactory bulb.

It localises to the cell membrane. The protein localises to the postsynaptic cell membrane. The protein resides in the synaptic cell membrane. It is found in the postsynaptic density membrane. The enzyme catalyses Ca(2+)(in) = Ca(2+)(out). It catalyses the reaction Na(+)(in) = Na(+)(out). It carries out the reaction K(+)(in) = K(+)(out). With respect to regulation, NMDA glutamate receptor activity is potentiated by Zn2(+) in a dose-dependent fashion. The potentiating effect of Zn2(+) is at submicromolar concentrations and its inhibitory action is at high micromolar to millimolar concentrations. Excitatory glycine receptors are inhibited by D-serine at 100uM. In terms of biological role, component of N-methyl-D-aspartate (NMDA) receptors (NMDARs) that function as heterotetrameric, ligand-gated cation channels with high calcium permeability and voltage-dependent block by Mg(2+). NMDARs participate in synaptic plasticity for learning and memory formation by contributing to the long-term potentiation (LTP). Channel activation requires binding of the neurotransmitter L-glutamate to the GluN2 subunit, glycine or D-serine binding to the GluN1 subunit, plus membrane depolarization to eliminate channel inhibition by Mg(2+). NMDARs mediate simultaneously the potasium efflux and the influx of calcium and sodium. Each GluN2 or GluN3 subunit confers differential attributes to channel properties, including activation, deactivation and desensitization kinetics, pH sensitivity, Ca2(+) permeability, and binding to allosteric modulators. Forms excitatory glycinergic receptor complexes with GluN3 alone which are activated by glycine binding to the GluN1 and GluN3 subunits. This Rattus norvegicus (Rat) protein is Glutamate receptor ionotropic, NMDA 1.